We begin with the raw amino-acid sequence, 596 residues long: Phosphomethylpyrimidine synthase 1 (596 aa).

Substrate-binding positions include asparagine 228, methionine 257, tyrosine 286, histidine 322, 342 to 344 (SRG), 383 to 386 (DGLR), and glutamate 422. Residue histidine 426 participates in Zn(2+) binding. Tyrosine 449 contacts substrate. A Zn(2+)-binding site is contributed by histidine 490. 3 residues coordinate [4Fe-4S] cluster: cysteine 570, cysteine 573, and cysteine 578.

Belongs to the ThiC family. Homodimer. [4Fe-4S] cluster serves as cofactor.

It catalyses the reaction 5-amino-1-(5-phospho-beta-D-ribosyl)imidazole + S-adenosyl-L-methionine = 4-amino-2-methyl-5-(phosphooxymethyl)pyrimidine + CO + 5'-deoxyadenosine + formate + L-methionine + 3 H(+). Its pathway is cofactor biosynthesis; thiamine diphosphate biosynthesis. Its function is as follows. Catalyzes the synthesis of the hydroxymethylpyrimidine phosphate (HMP-P) moiety of thiamine from aminoimidazole ribotide (AIR) in a radical S-adenosyl-L-methionine (SAM)-dependent reaction. This chain is Phosphomethylpyrimidine synthase 1, found in Syntrophotalea carbinolica (strain DSM 2380 / NBRC 103641 / GraBd1) (Pelobacter carbinolicus).